A 353-amino-acid polypeptide reads, in one-letter code: C-X-C chemokine receptor type 4 (353 aa).

The important for chemokine binding and signaling stretch occupies residues 1–22; it reads MEGIRIFTSDNYTEDDLGSGDY. Residues 1 to 39 lie on the Extracellular side of the membrane; the sequence is MEGIRIFTSDNYTEDDLGSGDYDSMKEPCFREENAHFNR. Asparagine 11 is a glycosylation site (N-linked (GlcNAc...) asparagine). Position 12 is a sulfotyrosine (tyrosine 12). Residue serine 19 is glycosylated (O-linked (Xyl...) (chondroitin sulfate) serine). Tyrosine 22 carries the post-translational modification Sulfotyrosine. Intrachain disulfides connect cysteine 29–cysteine 275 and cysteine 110–cysteine 187. A helical membrane pass occupies residues 40-64; it reads IFLPTVYSIIFLTGIVGNGLVILVM. Over 65 to 78 the chain is Cytoplasmic; sequence GYQKKLRSMTDKYR. The helical transmembrane segment at 79–100 threads the bilayer; the sequence is LHLSVADLLFVLTLPFWAVDAV. The chemokine binding stretch occupies residues 95–98; the sequence is WAVD. The Extracellular portion of the chain corresponds to 101–111; sequence ANWYFGKFLCK. Residues 112 to 131 traverse the membrane as a helical segment; that stretch reads AVHVIYTVNLYSSVLILAFI. The segment at 114–118 is chemokine binding; the sequence is HVIYT. Residues 132 to 155 lie on the Cytoplasmic side of the membrane; that stretch reads SLDRYLAIVHATNSQKPRKLLAEK. The Important for signaling signature appears at 134–136; that stretch reads DRY. The interval 136–148 is involved in dimerization; when bound to chemokine; it reads YLAIVHATNSQKP. The chain crosses the membrane as a helical span at residues 156-175; that stretch reads VVYVGVWLPAVLLTIPDLIF. At 176–196 the chain is on the extracellular side; it reads ADIKEVDERYICDRFYPSDLW. Residues 187-191 are chemokine binding, important for signaling; that stretch reads CDRFY. The tract at residues 192–211 is involved in dimerization; the sequence is PSDLWLVVFQFQHIVVGLLL. Residues 197–217 traverse the membrane as a helical segment; the sequence is LVVFQFQHIVVGLLLPGIVIL. Topologically, residues 218 to 242 are cytoplasmic; the sequence is SCYCIIISKLSHSKGYQKRKALKTT. Residues 243-262 form a helical membrane-spanning segment; it reads VILILTFFACWLPYYIGISI. At 263–283 the chain is on the extracellular side; the sequence is DSFILLEIIQQGCEFESTVHK. The involved in dimerization stretch occupies residues 267–269; it reads LLE. Residues 284 to 303 form a helical membrane-spanning segment; that stretch reads WISITEALAFFHCCLNPILY. Over 304–353 the chain is Cytoplasmic; the sequence is AFLGAKFKTSAQHALTSVSRGSSLKILSKGKRGGHSSVSTESESSSFHSS. Residues serine 320 and serine 322 each carry the phosphoserine modification. Residues serine 325 and serine 326 each carry the phosphoserine; by PKC and GRK6 modification. Residues 330–353 form a disordered region; the sequence is LSKGKRGGHSSVSTESESSSFHSS. Serine 331 is subject to Phosphoserine; by GRK6. Lysine 332 participates in a covalent cross-link: Glycyl lysine isopeptide (Lys-Gly) (interchain with G-Cter in ubiquitin). Positions 338–353 are enriched in low complexity; sequence HSSVSTESESSSFHSS. Serine 340 bears the Phosphoserine; by GRK6 mark. 2 positions are modified to phosphoserine: serine 349 and serine 352.

This sequence belongs to the G-protein coupled receptor 1 family. Monomer. Can form homodimers. Interacts with CD164. Interacts with ARRB2; the interaction is dependent on the C-terminal phosphorylation of CXCR4 and allows activation of MAPK1 and MAPK3. Interacts with ARR3; the interaction is dependent on the C-terminal phosphorylation of CXCR4 and modulates calcium mobilization. Interacts with RNF113A; the interaction, enhanced by CXCL12, promotes CXCR4 ubiquitination and subsequent degradation. Interacts (via the cytoplasmic C-terminal) with ITCH (via the WW domains I and II); the interaction, enhanced by CXCL12, promotes CXCR4 ubiquitination and leads to its degradation. Interacts with extracellular ubiquitin. Interacts with DBN1; this interaction is enhanced by antigenic stimulation. Following LPS binding, may form a complex with GDF5, HSP90AA1 and HSPA8. Phosphorylated on agonist stimulation. Rapidly phosphorylated on serine and threonine residues in the C-terminal. Phosphorylation at Ser-325 and Ser-326 leads to recruitment of ITCH, ubiquitination and protein degradation. Post-translationally, ubiquitinated after ligand binding, leading to its degradation. Ubiquitinated by ITCH at the cell membrane on agonist stimulation. The ubiquitin-dependent mechanism, endosomal sorting complex required for transport (ESCRT), then targets CXCR4 for lysosomal degradation. This process is dependent also on prior Ser-/Thr-phosphorylation in the C-terminal of CXCR4. Also binding of ARRB1 to STAM negatively regulates CXCR4 sorting to lysosomes though modulating ubiquitination of SFR5S. In terms of processing, sulfation is required for efficient binding of CXCL12/SDF-1alpha and promotes its dimerization. O- and N-glycosylated. N-glycosylation can mask coreceptor function. The O-glycosylation chondroitin sulfate attachment does not affect interaction with CXCL12/SDF-1alpha nor its coreceptor activity. Brain, heart, kidney, lung and liver.

It localises to the cell membrane. The protein resides in the cell junction. The protein localises to the early endosome. Its subcellular location is the late endosome. It is found in the lysosome. In terms of biological role, receptor for the C-X-C chemokine CXCL12/SDF-1 that transduces a signal by increasing intracellular calcium ion levels and enhancing MAPK1/MAPK3 activation. Involved in the AKT signaling cascade. Plays a role in regulation of cell migration, e.g. during wound healing. Acts as a receptor for extracellular ubiquitin; leading to enhanced intracellular calcium ions and reduced cellular cAMP levels. Binds bacterial lipopolysaccharide (LPS) et mediates LPS-induced inflammatory response, including TNF secretion by monocytes. Involved in hematopoiesis and in cardiac ventricular septum formation. Also plays an essential role in vascularization of the gastrointestinal tract, probably by regulating vascular branching and/or remodeling processes in endothelial cells. Involved in cerebellar development. In the CNS, could mediate hippocampal-neuron survival. This chain is C-X-C chemokine receptor type 4 (CXCR4), found in Bos taurus (Bovine).